The chain runs to 1588 residues: Pentafunctional AROM polypeptide (1588 aa).

The 3-dehydroquinate synthase stretch occupies residues 1–392; the sequence is MVQLAKVPIL…YGDSAQFVSD (392 aa). Residues 43 to 45, 78 to 81, 109 to 111, and aspartate 114 each bind NAD(+); these read DTN, ETSK, and GGV. Residue arginine 125 coordinates 7-phospho-2-dehydro-3-deoxy-D-arabino-heptonate. Position 134–135 (134–135) interacts with NAD(+); that stretch reads TS. 7-phospho-2-dehydro-3-deoxy-D-arabino-heptonate is bound by residues aspartate 141 and lysine 147. An NAD(+)-binding site is contributed by lysine 156. Asparagine 157 is a 7-phospho-2-dehydro-3-deoxy-D-arabino-heptonate binding site. Residues 174 to 177 and asparagine 185 contribute to the NAD(+) site; that span reads WLET. Glutamate 189 contacts Zn(2+). Residues 189–192 and lysine 258 each bind 7-phospho-2-dehydro-3-deoxy-D-arabino-heptonate; that span reads EVIK. The active-site Proton acceptor; for 3-dehydroquinate synthase activity is glutamate 268. 7-phospho-2-dehydro-3-deoxy-D-arabino-heptonate-binding positions include 272–276 and histidine 279; that span reads RNLLN. Position 279 (histidine 279) interacts with Zn(2+). Residue histidine 283 is the Proton acceptor; for 3-dehydroquinate synthase activity of the active site. Histidine 295 and lysine 364 together coordinate 7-phospho-2-dehydro-3-deoxy-D-arabino-heptonate. Histidine 295 is a Zn(2+) binding site. The interval 405 to 871 is EPSP synthase; the sequence is VYPFKDIPAD…WDVLHSELGA (467 aa). The active-site For EPSP synthase activity is cysteine 853. The segment at 890-1080 is shikimate kinase; sequence SVVIIGMRAA…IPSGRSAFVC (191 aa). Residue 895-902 participates in ATP binding; it reads GMRAAGKT. The 3-dehydroquinase stretch occupies residues 1081-1293; sequence LTFDDLTEQT…AAPGQLTVAQ (213 aa). Catalysis depends on histidine 1198, which acts as the Proton acceptor; for 3-dehydroquinate dehydratase activity. Lysine 1227 serves as the catalytic Schiff-base intermediate with substrate; for 3-dehydroquinate dehydratase activity. The interval 1306–1588 is shikimate dehydrogenase; sequence PKELFVVGKP…KAIFDAVTKE (283 aa).

In the N-terminal section; belongs to the sugar phosphate cyclases superfamily. Dehydroquinate synthase family. This sequence in the 2nd section; belongs to the EPSP synthase family. It in the 3rd section; belongs to the shikimate kinase family. The protein in the 4th section; belongs to the type-I 3-dehydroquinase family. In the C-terminal section; belongs to the shikimate dehydrogenase family. Homodimer. Requires Zn(2+) as cofactor.

The protein localises to the cytoplasm. The catalysed reaction is 7-phospho-2-dehydro-3-deoxy-D-arabino-heptonate = 3-dehydroquinate + phosphate. It catalyses the reaction 3-dehydroquinate = 3-dehydroshikimate + H2O. It carries out the reaction shikimate + NADP(+) = 3-dehydroshikimate + NADPH + H(+). The enzyme catalyses shikimate + ATP = 3-phosphoshikimate + ADP + H(+). The catalysed reaction is 3-phosphoshikimate + phosphoenolpyruvate = 5-O-(1-carboxyvinyl)-3-phosphoshikimate + phosphate. It functions in the pathway metabolic intermediate biosynthesis; chorismate biosynthesis; chorismate from D-erythrose 4-phosphate and phosphoenolpyruvate: step 2/7. It participates in metabolic intermediate biosynthesis; chorismate biosynthesis; chorismate from D-erythrose 4-phosphate and phosphoenolpyruvate: step 3/7. Its pathway is metabolic intermediate biosynthesis; chorismate biosynthesis; chorismate from D-erythrose 4-phosphate and phosphoenolpyruvate: step 4/7. The protein operates within metabolic intermediate biosynthesis; chorismate biosynthesis; chorismate from D-erythrose 4-phosphate and phosphoenolpyruvate: step 5/7. It functions in the pathway metabolic intermediate biosynthesis; chorismate biosynthesis; chorismate from D-erythrose 4-phosphate and phosphoenolpyruvate: step 6/7. In terms of biological role, the AROM polypeptide catalyzes 5 consecutive enzymatic reactions in prechorismate polyaromatic amino acid biosynthesis. This Saccharomyces cerevisiae (strain YJM789) (Baker's yeast) protein is Pentafunctional AROM polypeptide.